The chain runs to 211 residues: Transmembrane protein 247 (211 aa).

Composition is skewed to basic and acidic residues over residues M1–E10 and P31–K45. A disordered region spans residues M1–V90. Residues P63–S73 are compositionally biased toward pro residues. Positions K119 to L148 form a coiled coil. The next 2 helical transmembrane spans lie at L159–I179 and V186–I206.

The protein localises to the membrane. This chain is Transmembrane protein 247 (Tmem247), found in Mus musculus (Mouse).